The sequence spans 367 residues: Phosphoglycerate kinase (367 aa).

(2R)-3-phosphoglycerate is bound by residues Val-1, Asp-2, Phe-3, Asn-4, Arg-17, Ser-40, His-41, Gly-43, Arg-44, Leu-98, Arg-99, His-146, and Arg-147. Gly-190 lines the ADP pocket. Gly-190 provides a ligand contact to CDP. Positions 191 and 192 each coordinate AMP. Ala-191 provides a ligand contact to ATP. Ala-191 is a Mg(2+) binding site. Ala-194 and Asp-195 together coordinate Mg(2+). Residue Asp-195 participates in CDP binding. Lys-196 is a binding site for AMP. Lys-196 serves as a coordination point for ATP. An ADP-binding site is contributed by Gly-214. A CDP-binding site is contributed by Gly-214. AMP contacts are provided by Gly-215 and Gly-289. The ATP site is built by Gly-215 and Gly-289. CDP is bound by residues Gly-314 and Phe-319. Residue Phe-319 participates in ADP binding. Glu-320 is a binding site for AMP. ATP-binding residues include Glu-320, Asp-351, and Thr-352. Residue Asp-351 participates in Mg(2+) binding.

The protein belongs to the phosphoglycerate kinase family. Monomer. Requires Mg(2+) as cofactor.

It catalyses the reaction (2R)-3-phosphoglycerate + ATP = (2R)-3-phospho-glyceroyl phosphate + ADP. The protein operates within carbohydrate degradation; glycolysis; pyruvate from D-glyceraldehyde 3-phosphate: step 2/5. The sequence is that of Phosphoglycerate kinase (PGK) from Paramecium primaurelia.